The primary structure comprises 291 residues: Small ribosomal subunit biogenesis GTPase RsgA (291 aa).

Residues 63-221 (KNELKRPPVS…IADTPGFSAL (159 aa)) enclose the CP-type G domain. GTP contacts are provided by residues 112–115 (TKKD) and 164–172 (GQSGVGKST). C245, C250, H252, and C258 together coordinate Zn(2+).

This sequence belongs to the TRAFAC class YlqF/YawG GTPase family. RsgA subfamily. In terms of assembly, monomer. Associates with 30S ribosomal subunit, binds 16S rRNA. Requires Zn(2+) as cofactor.

The protein localises to the cytoplasm. One of several proteins that assist in the late maturation steps of the functional core of the 30S ribosomal subunit. Helps release RbfA from mature subunits. May play a role in the assembly of ribosomal proteins into the subunit. Circularly permuted GTPase that catalyzes slow GTP hydrolysis, GTPase activity is stimulated by the 30S ribosomal subunit. The protein is Small ribosomal subunit biogenesis GTPase RsgA of Staphylococcus aureus (strain MRSA252).